A 194-amino-acid polypeptide reads, in one-letter code: Ras-related protein RabU (194 aa).

19-27 (GYDYECGIK) lines the GTP pocket. Residues 42–50 (PESQVGVDF) carry the Effector region motif. Residues 68–72 (PQNKY) and 130–133 (NNSE) each bind GTP.

The protein belongs to the small GTPase superfamily. Rab family.

This chain is Ras-related protein RabU (rabU), found in Dictyostelium discoideum (Social amoeba).